We begin with the raw amino-acid sequence, 161 residues long: Vasotocin-neurophysin VT (161 aa).

The N-terminal stretch at 1–22 (MSAMGWTLLAAALLAISAQSNG) is a signal peptide. The cysteines at positions 23 and 28 are disulfide-linked. Gly31 carries the post-translational modification Glycine amide. 7 disulfide bridges follow: Cys43/Cys91, Cys46/Cys58, Cys52/Cys81, Cys59/Cys71, Cys99/Cys111, Cys105/Cys123, and Cys112/Cys117.

It belongs to the vasopressin/oxytocin family.

It is found in the secreted. Its function is as follows. Vasotocin is an antidiuretic hormone. This is Vasotocin-neurophysin VT from Eptatretus stoutii (Pacific hagfish).